Reading from the N-terminus, the 147-residue chain is MSAPTTPAAALDDVEEGVVLRPKFDAAGLVTCVTTDAQSGDVLMVAFMNDEALKKTIDSGEAWYFSRSRGRLWRKGESSGHVQRVLEIRVDCDQDAVWIKVEQGGGAACHTGRKSCFYRRVDRDAEGAPLLSPVDAERLFDPAKVYR.

Asp91 is a Mg(2+) binding site. Cys92 lines the Zn(2+) pocket. Residues Asp93 and Asp95 each contribute to the Mg(2+) site. Zn(2+) contacts are provided by Cys109 and Cys116.

Belongs to the PRA-CH family. In terms of assembly, homodimer. Requires Mg(2+) as cofactor. The cofactor is Zn(2+).

It localises to the cytoplasm. The enzyme catalyses 1-(5-phospho-beta-D-ribosyl)-5'-AMP + H2O = 1-(5-phospho-beta-D-ribosyl)-5-[(5-phospho-beta-D-ribosylamino)methylideneamino]imidazole-4-carboxamide. It functions in the pathway amino-acid biosynthesis; L-histidine biosynthesis; L-histidine from 5-phospho-alpha-D-ribose 1-diphosphate: step 3/9. Catalyzes the hydrolysis of the adenine ring of phosphoribosyl-AMP. The protein is Phosphoribosyl-AMP cyclohydrolase of Rhodopseudomonas palustris (strain BisB18).